The chain runs to 156 residues: Small ribosomal subunit protein uS7 (156 aa).

This sequence belongs to the universal ribosomal protein uS7 family. Part of the 30S ribosomal subunit. Contacts proteins S9 and S11.

In terms of biological role, one of the primary rRNA binding proteins, it binds directly to 16S rRNA where it nucleates assembly of the head domain of the 30S subunit. Is located at the subunit interface close to the decoding center, probably blocks exit of the E-site tRNA. This Laribacter hongkongensis (strain HLHK9) protein is Small ribosomal subunit protein uS7.